Here is a 754-residue protein sequence, read N- to C-terminus: 5-methyltetrahydropteroyltriglutamate--homocysteine methyltransferase (754 aa).

5-methyltetrahydropteroyltri-L-glutamate-binding positions include 17–20 (RELK) and Lys-117. L-homocysteine is bound by residues 431–433 (IGS) and Glu-484. Residues 431-433 (IGS) and Glu-484 contribute to the L-methionine site. 5-methyltetrahydropteroyltri-L-glutamate is bound by residues 515-516 (RC) and Trp-561. Asp-599 contacts L-homocysteine. Position 599 (Asp-599) interacts with L-methionine. A 5-methyltetrahydropteroyltri-L-glutamate-binding site is contributed by Glu-605. Zn(2+)-binding residues include His-641, Cys-643, and Glu-665. Catalysis depends on His-694, which acts as the Proton donor. Cys-726 is a Zn(2+) binding site.

The protein belongs to the vitamin-B12 independent methionine synthase family. It depends on Zn(2+) as a cofactor.

It carries out the reaction 5-methyltetrahydropteroyltri-L-glutamate + L-homocysteine = tetrahydropteroyltri-L-glutamate + L-methionine. The protein operates within amino-acid biosynthesis; L-methionine biosynthesis via de novo pathway; L-methionine from L-homocysteine (MetE route): step 1/1. Catalyzes the transfer of a methyl group from 5-methyltetrahydrofolate to homocysteine resulting in methionine formation. This chain is 5-methyltetrahydropteroyltriglutamate--homocysteine methyltransferase, found in Salmonella paratyphi B (strain ATCC BAA-1250 / SPB7).